Reading from the N-terminus, the 158-residue chain is SKP1-like protein 18 (158 aa).

The interaction with the F-box domain of F-box proteins stretch occupies residues 99–157 (ILAANYLNFEGLLGFASQTVADYIKDKTPEEVREIFNIENDFTPEEEEEIRKENAWTFN).

Belongs to the SKP1 family. Part of a SCF (SKP1-cullin-F-box) protein ligase complex. Interacts with CPR1/CPR30, EBF1, SKP2A, At3g61590, At4g38940 and At5g49610. As to expression, expressed in young seedlings, roots, leaves, floral stems, inflorescences, pollen, and siliques.

The protein resides in the nucleus. The protein operates within protein modification; protein ubiquitination. Functionally, involved in ubiquitination and subsequent proteasomal degradation of target proteins. Together with CUL1, RBX1 and a F-box protein, it forms a SCF E3 ubiquitin ligase complex. The functional specificity of this complex depends on the type of F-box protein. In the SCF complex, it serves as an adapter that links the F-box protein to CUL1. The chain is SKP1-like protein 18 (ASK18) from Arabidopsis thaliana (Mouse-ear cress).